The sequence spans 736 residues: Factor of DNA methylation 4 (736 aa).

Composition is skewed to basic and acidic residues over residues 80–90 (RKYLRPRERPR) and 144–167 (DSGRSGEERLKFSDKPDPFFSNED). The disordered stretch occupies residues 80–167 (RKYLRPRERP…KPDPFFSNED (88 aa)). Residues 360 to 597 (TLVSNLENTL…RSMRELTTRA (238 aa)) are a coiled coil.

Functionally, acts in association with FDM3 and FDM5 for RNA-directed DNA methylation (RdDM). In Arabidopsis thaliana (Mouse-ear cress), this protein is Factor of DNA methylation 4.